The primary structure comprises 354 residues: Uroporphyrinogen decarboxylase (354 aa).

Substrate contacts are provided by residues 27-31, D77, Y154, S209, and H327; that span reads RQAGR.

This sequence belongs to the uroporphyrinogen decarboxylase family. Homodimer.

The protein resides in the cytoplasm. It catalyses the reaction uroporphyrinogen III + 4 H(+) = coproporphyrinogen III + 4 CO2. Its pathway is porphyrin-containing compound metabolism; protoporphyrin-IX biosynthesis; coproporphyrinogen-III from 5-aminolevulinate: step 4/4. Its function is as follows. Catalyzes the decarboxylation of four acetate groups of uroporphyrinogen-III to yield coproporphyrinogen-III. The sequence is that of Uroporphyrinogen decarboxylase from Shewanella denitrificans (strain OS217 / ATCC BAA-1090 / DSM 15013).